The primary structure comprises 390 residues: Probable tRNA pseudouridine synthase D (390 aa).

The Nucleophile role is filled by Asp-93. One can recognise a TRUD domain in the interval His-166–Pro-353.

It belongs to the pseudouridine synthase TruD family.

It catalyses the reaction uridine(13) in tRNA = pseudouridine(13) in tRNA. In terms of biological role, could be responsible for synthesis of pseudouridine from uracil-13 in transfer RNAs. The chain is Probable tRNA pseudouridine synthase D from Methanococcus vannielii (strain ATCC 35089 / DSM 1224 / JCM 13029 / OCM 148 / SB).